Here is a 160-residue protein sequence, read N- to C-terminus: Cyclic pyranopterin monophosphate synthase (160 aa).

Substrate-binding positions include 73–75 and 110–111; these read LCH and ME. The active site involves aspartate 125.

The protein belongs to the MoaC family. As to quaternary structure, homohexamer; trimer of dimers.

It catalyses the reaction (8S)-3',8-cyclo-7,8-dihydroguanosine 5'-triphosphate = cyclic pyranopterin phosphate + diphosphate. The protein operates within cofactor biosynthesis; molybdopterin biosynthesis. Functionally, catalyzes the conversion of (8S)-3',8-cyclo-7,8-dihydroguanosine 5'-triphosphate to cyclic pyranopterin monophosphate (cPMP). The chain is Cyclic pyranopterin monophosphate synthase from Pseudomonas paraeruginosa (strain DSM 24068 / PA7) (Pseudomonas aeruginosa (strain PA7)).